A 323-amino-acid polypeptide reads, in one-letter code: Probable cell division protein WhiA (323 aa).

The H-T-H motif DNA-binding region spans 275 to 309; that stretch reads TLKELGEMLTTGQVSKSGINHRLRKLDQIAERLRS.

The protein belongs to the WhiA family.

Involved in cell division and chromosome segregation. The protein is Probable cell division protein WhiA of Listeria welshimeri serovar 6b (strain ATCC 35897 / DSM 20650 / CCUG 15529 / CIP 8149 / NCTC 11857 / SLCC 5334 / V8).